A 204-amino-acid chain; its full sequence is Peptidyl-tRNA hydrolase (204 aa).

Residue Tyr19 coordinates tRNA. Residue His24 is the Proton acceptor of the active site. 3 residues coordinate tRNA: Tyr70, Asn72, and Asn118.

This sequence belongs to the PTH family. In terms of assembly, monomer.

It is found in the cytoplasm. The catalysed reaction is an N-acyl-L-alpha-aminoacyl-tRNA + H2O = an N-acyl-L-amino acid + a tRNA + H(+). Hydrolyzes ribosome-free peptidyl-tRNAs (with 1 or more amino acids incorporated), which drop off the ribosome during protein synthesis, or as a result of ribosome stalling. Its function is as follows. Catalyzes the release of premature peptidyl moieties from peptidyl-tRNA molecules trapped in stalled 50S ribosomal subunits, and thus maintains levels of free tRNAs and 50S ribosomes. The protein is Peptidyl-tRNA hydrolase of Prochlorococcus marinus (strain SARG / CCMP1375 / SS120).